The primary structure comprises 154 residues: Superoxide dismutase [Cu-Zn] (154 aa).

Lys-19 is covalently cross-linked (Glycyl lysine isopeptide (Lys-Gly) (interchain with G-Cter in SUMO)). Phosphoserine is present on residues Ser-26 and Ser-39. Glu-43 contacts Zn(2+). Positions 47, 49, and 64 each coordinate Cu cation. Cys-58 and Cys-147 are disulfide-bonded. His-64 serves as a coordination point for Zn(2+). Lys-70 participates in a covalent cross-link: Glycyl lysine isopeptide (Lys-Gly) (interchain with G-Cter in SUMO). Zn(2+) is bound by residues His-72, His-81, and Asp-84. 2 positions are modified to phosphoserine: Ser-99 and Ser-117. His-121 is a binding site for Cu cation. Phosphothreonine occurs at positions 132 and 138. Arg-144 lines the substrate pocket.

It belongs to the Cu-Zn superoxide dismutase family. As to quaternary structure, homodimer in holo form. In apo form, heterodimer with CCS1. Zinc-binding at 'His-16' of CCS1 and Glu-43 of apo-SOD1 is required for this heterodimerization. Requires Cu cation as cofactor. The cofactor is Zn(2+).

It is found in the cytoplasm. Its subcellular location is the mitochondrion intermembrane space. It catalyses the reaction 2 superoxide + 2 H(+) = H2O2 + O2. Its function is as follows. Destroys radicals which are normally produced within the cells and which are toxic to biological systems. In Saccharomyces cerevisiae (strain ATCC 204508 / S288c) (Baker's yeast), this protein is Superoxide dismutase [Cu-Zn].